The following is a 445-amino-acid chain: Anthranilate N-benzoyltransferase protein 1 (445 aa).

Catalysis depends on proton acceptor residues His-164 and Asp-392.

It belongs to the plant acyltransferase family. N-terminus is blocked.

The enzyme catalyses anthranilate + benzoyl-CoA = N-benzoylanthranilate + CoA. The protein operates within phytoalexin biosynthesis; methoxydianthramide B biosynthesis. Catalyzes the formation of N-benzoylanthranilate, in the course of methoxydianthramide B, a phytoalexin. Phytoalexins are produced in response to infection by parasites, and are essential for the expression of disease resistance. This Dianthus caryophyllus (Carnation) protein is Anthranilate N-benzoyltransferase protein 1 (HCBT1).